Consider the following 352-residue polypeptide: Palmitoyltransferase PFA5 (352 aa).

Helical transmembrane passes span 12–32 (YWTI…GTWA) and 53–73 (IGLI…WVLI). A DHHC domain is found at 114 to 164 (VWCSNCQSLKVGRTKHSSHQGHCVPRFDHYCVWLGAVIGFKNYRLFVQFVF). The active-site S-palmitoyl cysteine intermediate is Cys-144. 2 helical membrane passes run 159–179 (FVQF…TISV) and 195–215 (LIVL…LFVS).

The protein belongs to the DHHC palmitoyltransferase family. PFA5 subfamily.

It localises to the membrane. It catalyses the reaction L-cysteinyl-[protein] + hexadecanoyl-CoA = S-hexadecanoyl-L-cysteinyl-[protein] + CoA. The protein is Palmitoyltransferase PFA5 (PFA5) of Candida glabrata (strain ATCC 2001 / BCRC 20586 / JCM 3761 / NBRC 0622 / NRRL Y-65 / CBS 138) (Yeast).